A 352-amino-acid chain; its full sequence is Threonine synthase (352 aa).

Residue lysine 59 is modified to N6-(pyridoxal phosphate)lysine. Pyridoxal 5'-phosphate is bound by residues asparagine 85, glycine 185–asparagine 189, and threonine 314.

This sequence belongs to the threonine synthase family. It depends on pyridoxal 5'-phosphate as a cofactor.

The catalysed reaction is O-phospho-L-homoserine + H2O = L-threonine + phosphate. The protein operates within amino-acid biosynthesis; L-threonine biosynthesis; L-threonine from L-aspartate: step 5/5. Catalyzes the gamma-elimination of phosphate from L-phosphohomoserine and the beta-addition of water to produce L-threonine. This Bacillus subtilis (strain 168) protein is Threonine synthase (thrC).